We begin with the raw amino-acid sequence, 1683 residues long: Genome polyprotein (1683 aa).

Over 1-445 the chain is Extracellular; that stretch reads MRCIGISNRD…LHQVFGAIYG (445 aa). Cystine bridges form between Cys-3/Cys-30, Cys-60/Cys-121, Cys-74/Cys-105, and Cys-92/Cys-116. Asn-67 carries an N-linked (GlcNAc...) asparagine; by host glycan. The fusion peptide stretch occupies residues 98–111; sequence DRGWGNGCGLFGKG. Asn-153 carries N-linked (GlcNAc...) asparagine; by host glycosylation. Cystine bridges form between Cys-185-Cys-285 and Cys-302-Cys-333. The helical transmembrane segment at 446 to 466 threads the bilayer; that stretch reads AAFSGVSWTMKILIGVIITWI. Residues 467–472 lie on the Cytoplasmic side of the membrane; it reads GMNSRS. A helical membrane pass occupies residues 473 to 493; the sequence is TSLSVSLVLVGIVTLYLGVMV. At 494-915 the chain is on the extracellular side; sequence QADSGCVVSW…MVGATMTDDI (422 aa). 6 disulfides stabilise this stretch: Cys-499–Cys-510, Cys-550–Cys-638, Cys-674–Cys-718, Cys-775–Cys-824, Cys-786–Cys-808, and Cys-807–Cys-811. The N-linked (GlcNAc...) asparagine; by host glycan is linked to Asn-702. Residues 916 to 940 traverse the membrane as a helical segment; the sequence is GMGVTYLALLAAFRVRPTFAAGLLL. Over 941 to 946 the chain is Cytoplasmic; it reads RKLTSK. Residues 947–965 form a helical membrane-spanning segment; that stretch reads ELMMTTIGIVLLSQSSIPE. The Lumenal portion of the chain corresponds to 966-989; the sequence is TILELTDALALGMMVLKMVRNMEK. Residues 990–1010 form a helical membrane-spanning segment; that stretch reads YQLAVTIMAILCVPNAVILQN. A topological domain (cytoplasmic) is located at residue Ala-1011. The helical transmembrane segment at 1012–1030 threads the bilayer; that stretch reads WKVSCTILAVVSVSPLLLT. Residues 1031–1037 lie on the Lumenal side of the membrane; it reads SSQQKAD. The chain crosses the membrane as a helical span at residues 1038 to 1058; that stretch reads WIPLALTIKGLNPTAIFLTTL. At 1059–1683 the chain is on the cytoplasmic side; the sequence is SRTSKKRAGV…EFKEFAAGRK (625 aa). The Peptidase S7 domain occupies 1066 to 1243; that stretch reads AGVLWDVPSP…EKSIEDNPEI (178 aa). Catalysis depends on charge relay system; for serine protease NS3 activity residues His-1116, Asp-1140, and Ser-1200. The Helicase ATP-binding domain occupies 1245–1401; it reads DDIFRKRRLT…QSNAPIMDEE (157 aa). Residues 1249–1252 are important for RNA-binding; that stretch reads RKRR. 1258 to 1265 contributes to the ATP binding site; it reads LHPGAGKT. Positions 1349 to 1352 match the DEAH box motif; sequence DEAH. Positions 1411-1582 constitute a Helicase C-terminal domain; the sequence is SGHEWVTDFK…IFEPEREKVD (172 aa).

Capsid protein C: Homodimer. Interacts (via N-terminus) with host EXOC1 (via C-terminus); this interaction results in EXOC1 degradation through the proteasome degradation pathway. Protein prM: Forms heterodimers with envelope protein E in the endoplasmic reticulum and Golgi. As to quaternary structure, homodimer; in the endoplasmic reticulum and Golgi. Interacts with protein prM. Interacts with non-structural protein 1. In terms of assembly, homodimer; Homohexamer when secreted. Interacts with envelope protein E. Interacts (via N-terminus) with serine protease NS3. Non-structural protein 2B: Forms a heterodimer with serine protease NS3. May form homooligomers. As to quaternary structure, forms a heterodimer with NS2B. Interacts with NS4B. Interacts with unphosphorylated RNA-directed RNA polymerase NS5; this interaction stimulates RNA-directed RNA polymerase NS5 guanylyltransferase activity. Interacts with host SHFL. Specific enzymatic cleavages in vivo yield mature proteins. Cleavages in the lumen of endoplasmic reticulum are performed by host signal peptidase, wereas cleavages in the cytoplasmic side are performed by the Serine protease NS3. Signal cleavage at the 2K-4B site requires a prior NS3 protease-mediated cleavage at the 4A-2K site. Post-translationally, N-glycosylated. The excreted form is glycosylated and this is required for efficient secretion of the protein from infected cells. In terms of processing, N-glycosylated. Specific enzymatic cleavages in vivo yield mature proteins. Cleavages in the lumen of endoplasmic reticulum are performed by host signal peptidase, wereas cleavages in the cytoplasmic side are performed by serine protease NS3. Signal cleavage at the 2K-4B site requires a prior NS3 protease-mediated cleavage at the 4A-2K site.

Its subcellular location is the virion membrane. It is found in the host endoplasmic reticulum membrane. The protein resides in the secreted. The enzyme catalyses Selective hydrolysis of -Xaa-Xaa-|-Yaa- bonds in which each of the Xaa can be either Arg or Lys and Yaa can be either Ser or Ala.. The catalysed reaction is a ribonucleoside 5'-triphosphate + H2O = a ribonucleoside 5'-diphosphate + phosphate + H(+). It carries out the reaction ATP + H2O = ADP + phosphate + H(+). Functionally, binds to host cell surface receptor and mediates fusion between viral and cellular membranes. Envelope protein is synthesized in the endoplasmic reticulum in the form of heterodimer with protein prM. They play a role in virion budding in the ER, and the newly formed immature particle is covered with 60 spikes composed of heterodimer between precursor prM and envelope protein E. The virion is transported to the Golgi apparatus where the low pH causes dissociation of PrM-E heterodimers and formation of E homodimers. prM-E cleavage is inefficient, and many virions are only partially matured. These uncleaved prM would play a role in immune evasion. Involved in immune evasion, pathogenesis and viral replication. Once cleaved off the polyprotein, is targeted to three destinations: the viral replication cycle, the plasma membrane and the extracellular compartment. Essential for viral replication. Required for formation of the replication complex and recruitment of other non-structural proteins to the ER-derived membrane structures. Excreted as a hexameric lipoparticle that plays a role against host immune response. Antagonizing the complement function. Binds to the host macrophages and dendritic cells. Inhibits signal transduction originating from Toll-like receptor 3 (TLR3). In terms of biological role, disrupts the host endothelial glycocalyx layer of host pulmonary microvascular endothelial cells, inducing degradation of sialic acid and shedding of heparan sulfate proteoglycans. NS1 induces expression of sialidases, heparanase, and activates cathepsin L, which activates heparanase via enzymatic cleavage. These effects are probably linked to the endothelial hyperpermeability observed in severe dengue disease. Its function is as follows. Component of the viral RNA replication complex that functions in virion assembly and antagonizes the host immune response. Functionally, serine protease subunit NS2B: Required cofactor for the serine protease function of NS3. May have membrane-destabilizing activity and form viroporins. Displays three enzymatic activities: serine protease, NTPase and RNA helicase. NS3 serine protease, in association with NS2B, performs its autocleavage and cleaves the polyprotein at dibasic sites in the cytoplasm: C-prM, NS2A-NS2B, NS2B-NS3, NS3-NS4A, NS4A-2K and NS4B-NS5. NS3 RNA helicase binds RNA and unwinds dsRNA in the 3' to 5' direction. In Aedimorphus (Red guenon), this protein is Genome polyprotein.